We begin with the raw amino-acid sequence, 356 residues long: Gluconolactonase (356 aa).

The tat-type signal signal peptide spans 1-35 (MTTGRMSRRECLSAAVMVPIAAMTATATITGSAQA).

As to quaternary structure, homodimer. Post-translationally, predicted to be exported by the Tat system. The position of the signal peptide cleavage has been experimentally proven.

The protein resides in the periplasm. It catalyses the reaction D-glucono-1,5-lactone + H2O = D-gluconate + H(+). It participates in carbohydrate acid metabolism; D-gluconate biosynthesis; D-gluconate from D-glucono-1,5-lactone: step 1/1. Its function is as follows. Hydrolyzes the gluconolactone formed by glucose-fructose oxidoreductase, and that formed in aerobic conditions by the glucose dehydrogenase present. The sequence is that of Gluconolactonase (gnl) from Zymomonas mobilis subsp. mobilis (strain ATCC 31821 / ZM4 / CP4).